The following is a 196-amino-acid chain: 3-isopropylmalate dehydratase small subunit (196 aa).

This sequence belongs to the LeuD family. LeuD type 1 subfamily. In terms of assembly, heterodimer of LeuC and LeuD.

It carries out the reaction (2R,3S)-3-isopropylmalate = (2S)-2-isopropylmalate. It participates in amino-acid biosynthesis; L-leucine biosynthesis; L-leucine from 3-methyl-2-oxobutanoate: step 2/4. In terms of biological role, catalyzes the isomerization between 2-isopropylmalate and 3-isopropylmalate, via the formation of 2-isopropylmaleate. This chain is 3-isopropylmalate dehydratase small subunit, found in Corynebacterium aurimucosum (strain ATCC 700975 / DSM 44827 / CIP 107346 / CN-1) (Corynebacterium nigricans).